Reading from the N-terminus, the 151-residue chain is Ribosome maturation factor RimP (151 aa).

It belongs to the RimP family.

The protein resides in the cytoplasm. In terms of biological role, required for maturation of 30S ribosomal subunits. The polypeptide is Ribosome maturation factor RimP (Shewanella putrefaciens (strain CN-32 / ATCC BAA-453)).